The primary structure comprises 147 residues: Small ribosomal subunit protein eS19 (147 aa).

Belongs to the eukaryotic ribosomal protein eS19 family. As to quaternary structure, component of the small ribosomal subunit.

It is found in the cytoplasm. Its subcellular location is the nucleus. Component of the small ribosomal subunit. The ribosome is a large ribonucleoprotein complex responsible for the synthesis of proteins in the cell. Required for pre-rRNA processing and maturation of 40S ribosomal subunits. In Gillichthys mirabilis (Long-jawed mudsucker), this protein is Small ribosomal subunit protein eS19 (rps19).